The following is an 87-amino-acid chain: U3-theraphotoxin-Hhn1h (87 aa).

The first 24 residues, 1–24 (MVNMKASMFLTFAGLVLLFVVCYA), serve as a signal peptide directing secretion. Positions 25–52 (SESEEKEFPKEMLSSIFAVDNDSKQEER) are excised as a propeptide. 3 cysteine pairs are disulfide-bonded: cysteine 54–cysteine 67, cysteine 61–cysteine 72, and cysteine 66–cysteine 79.

This sequence belongs to the neurotoxin 10 (Hwtx-1) family. 51 (Hntx-8) subfamily. Hntx-8 sub-subfamily. In terms of tissue distribution, expressed by the venom gland.

It localises to the secreted. In terms of biological role, ion channel inhibitor. In Cyriopagopus hainanus (Chinese bird spider), this protein is U3-theraphotoxin-Hhn1h.